A 141-amino-acid polypeptide reads, in one-letter code: Large ribosomal subunit protein uL11 (141 aa).

This sequence belongs to the universal ribosomal protein uL11 family. As to quaternary structure, part of the ribosomal stalk of the 50S ribosomal subunit. Interacts with L10 and the large rRNA to form the base of the stalk. L10 forms an elongated spine to which L12 dimers bind in a sequential fashion forming a multimeric L10(L12)X complex. In terms of processing, one or more lysine residues are methylated.

Its function is as follows. Forms part of the ribosomal stalk which helps the ribosome interact with GTP-bound translation factors. The protein is Large ribosomal subunit protein uL11 of Fusobacterium nucleatum subsp. nucleatum (strain ATCC 25586 / DSM 15643 / BCRC 10681 / CIP 101130 / JCM 8532 / KCTC 2640 / LMG 13131 / VPI 4355).